The following is a 100-amino-acid chain: Biogenesis of lysosome-related organelles complex 1 subunit CNL1 (100 aa).

A coiled-coil region spans residues 25-46 (SDRVKSLELEATRLVQRQNELV).

Belongs to the BLOC1S4 family. As to quaternary structure, component of the biogenesis of lysosome-related organelles complex-1 (BLOC-1).

The protein resides in the cytoplasm. Component of the biogenesis of lysosome-related organelles complex-1 (BLOC-1), a complex that is involved in endosomal cargo sorting. This Candida glabrata (strain ATCC 2001 / BCRC 20586 / JCM 3761 / NBRC 0622 / NRRL Y-65 / CBS 138) (Yeast) protein is Biogenesis of lysosome-related organelles complex 1 subunit CNL1 (CLN1).